We begin with the raw amino-acid sequence, 257 residues long: Baramicin A1 (257 aa).

The first 19 residues, 1–19 (MKSFGLIALAICGVICVAA), serve as a signal peptide directing secretion. The propeptide occupies 20-21 (EP). Q22 bears the Pyrrolidone carboxylic acid mark. The disordered stretch occupies residues 95 to 122 (GPNFSAKNLGPNGAKSVGIPQRARRSPQ). N-linked (GlcNAc...) asparagine glycosylation occurs at N97. A propeptide spanning residues 118–121 (RRSP) is cleaved from the precursor. Pyrrolidone carboxylic acid is present on Q122. A propeptide spanning residues 145–148 (RRSP) is cleaved from the precursor. Q149 is subject to Pyrrolidone carboxylic acid. Positions 172–175 (RRSP) are excised as a propeptide. Q176 bears the Pyrrolidone carboxylic acid mark. The propeptide occupies 199–204 (RRGIND). An N-linked (GlcNAc...) asparagine glycan is attached at N225.

In terms of processing, proteolytically cleaved. Hemolymph (at protein level).

The protein localises to the secreted. Secreted immune-induced peptides induced by Toll signaling. Has a significant role in resistance to infection by the entomopathogenic fungus B.bassiana R444 and weak antifungal activity against M.rileyi PHP1705. In adult males, activity appears to be important for neuromuscular processes that mediate correct wing posture upon Toll activation. The protein is Baramicin A1 of Drosophila melanogaster (Fruit fly).